Here is a 409-residue protein sequence, read N- to C-terminus: Isovaleryl-CoA dehydrogenase, mitochondrial (409 aa).

Residues 1–22 constitute a mitochondrion transit peptide; sequence MQRFFSARSILGYAVKTRRRSF. Residues 151-160 and 184-186 each bind FAD; these read LAMSEPNAGS and WCT. Position 160 (Ser-160) interacts with substrate. Substrate-binding positions include 206–207, Tyr-261, and 268–271; these read SK and DLER. Glu-270 acts as the Proton acceptor in catalysis. FAD contacts are provided by residues Arg-296, Gln-307, and 364-368; that span reads QCLGG. 391–392 lines the substrate pocket; sequence AG. Residue 393 to 395 participates in FAD binding; it reads TSE.

This sequence belongs to the acyl-CoA dehydrogenase family. Homodimer. Requires FAD as cofactor. Expressed in leaves, stems and flowers. Not detected in roots.

It localises to the mitochondrion. The enzyme catalyses 3-methylbutanoyl-CoA + oxidized [electron-transfer flavoprotein] + H(+) = 3-methylbut-2-enoyl-CoA + reduced [electron-transfer flavoprotein]. Its pathway is amino-acid degradation; L-leucine degradation; (S)-3-hydroxy-3-methylglutaryl-CoA from 3-isovaleryl-CoA: step 1/3. Functionally, involved in degradation of the branched-chain amino acids, phytol and lysine for the supply of carbon and electrons to the ETF/ETFQO complex during dark-induced sugar starvation. This chain is Isovaleryl-CoA dehydrogenase, mitochondrial (IVD), found in Arabidopsis thaliana (Mouse-ear cress).